The following is a 354-amino-acid chain: Rhodopsin (354 aa).

The Extracellular segment spans residues 1 to 36 (MNGTEGPNFYIPMSNKTGVVRSPFEYPQYYLAEPWK). N-linked (GlcNAc...) asparagine glycosylation is found at Asn-2 and Asn-15. A helical membrane pass occupies residues 37–61 (YSILAAYMFLLILLGFPINFMTLYV). At 62-73 (TIQHKKLRTPLN) the chain is on the cytoplasmic side. A helical membrane pass occupies residues 74–96 (YILLNLAFANHFMVLCGFTITLY). Over 97 to 110 (TSLHGYFVFGQSGC) the chain is Extracellular. Cys-110 and Cys-187 are oxidised to a cystine. The helical transmembrane segment at 111-133 (YFEGFFATLGGEIALWSLVALAI) threads the bilayer. The 'Ionic lock' involved in activated form stabilization motif lies at 134-136 (ERY). Topologically, residues 134-152 (ERYIVVCKPMSNFRFGENH) are cytoplasmic. A helical transmembrane segment spans residues 153-173 (AMMGVAFTWIMALACAVPPLF). Residues 174-202 (GWSRYIPEGMQCSCGVDYYTLKPEINNES) are Extracellular-facing. Residues 203–224 (FVIYMFVVHFLIPLIIITFCYG) traverse the membrane as a helical segment. Over 225-252 (RLVCTVKEAAAQQQESATTQKAEKEVTR) the chain is Cytoplasmic. Residues 253–274 (MVIIMVIFFLICWVPYAYVAFY) traverse the membrane as a helical segment. Residues 275 to 286 (IFCNQGSEFGPI) lie on the Extracellular side of the membrane. Residues 287–308 (FMTVPAFFAKSSAIYNPVIYIM) traverse the membrane as a helical segment. Lys-296 carries the post-translational modification N6-(retinylidene)lysine. Residues 309-354 (LNKQFRNCMITTLCCGKNPFGDDDASSAATSKTEATSVSTSQVSPA) are Cytoplasmic-facing. S-palmitoyl cysteine attachment occurs at residues Cys-322 and Cys-323. The disordered stretch occupies residues 332–354 (DASSAATSKTEATSVSTSQVSPA). Positions 334-354 (SSAATSKTEATSVSTSQVSPA) are enriched in low complexity.

Belongs to the G-protein coupled receptor 1 family. Opsin subfamily. Post-translationally, contains one covalently linked retinal chromophore. Upon light absorption, the covalently bound 11-cis-retinal is converted to all-trans-retinal. After hydrolysis of the Schiff base and release of the covalently bound all-trans-retinal, active rhodopsin is regenerated by binding of a fresh molecule of 11-cis-retinal.

The protein localises to the membrane. It localises to the cell projection. It is found in the cilium. The protein resides in the photoreceptor outer segment. Its function is as follows. Photoreceptor required for image-forming vision at low light intensity. Required for photoreceptor cell viability after birth. Light-induced isomerization of 11-cis to all-trans retinal triggers a conformational change that activates signaling via G-proteins. Subsequent receptor phosphorylation mediates displacement of the bound G-protein alpha subunit by arrestin and terminates signaling. This Rana temporaria (European common frog) protein is Rhodopsin (RHO).